A 628-amino-acid polypeptide reads, in one-letter code: 1-deoxy-D-xylulose-5-phosphate synthase (628 aa).

Residues His72 and 113 to 115 (GHS) contribute to the thiamine diphosphate site. A Mg(2+)-binding site is contributed by Asp144. Thiamine diphosphate-binding positions include 145–146 (GA), Asn173, Tyr284, and Glu363. Position 173 (Asn173) interacts with Mg(2+).

This sequence belongs to the transketolase family. DXPS subfamily. As to quaternary structure, homodimer. It depends on Mg(2+) as a cofactor. The cofactor is thiamine diphosphate.

The enzyme catalyses D-glyceraldehyde 3-phosphate + pyruvate + H(+) = 1-deoxy-D-xylulose 5-phosphate + CO2. Its pathway is metabolic intermediate biosynthesis; 1-deoxy-D-xylulose 5-phosphate biosynthesis; 1-deoxy-D-xylulose 5-phosphate from D-glyceraldehyde 3-phosphate and pyruvate: step 1/1. Its function is as follows. Catalyzes the acyloin condensation reaction between C atoms 2 and 3 of pyruvate and glyceraldehyde 3-phosphate to yield 1-deoxy-D-xylulose-5-phosphate (DXP). The polypeptide is 1-deoxy-D-xylulose-5-phosphate synthase (Brevibacillus brevis (strain 47 / JCM 6285 / NBRC 100599)).